The sequence spans 190 residues: Ribosome hibernation promotion factor (190 aa).

This sequence belongs to the HPF/YfiA ribosome-associated protein family. Long HPF subfamily. In terms of assembly, interacts with 100S ribosomes.

Its subcellular location is the cytoplasm. In terms of biological role, required for dimerization of active 70S ribosomes into 100S ribosomes in stationary phase; 100S ribosomes are translationally inactive and sometimes present during exponential growth. The polypeptide is Ribosome hibernation promotion factor (Staphylococcus aureus (strain COL)).